We begin with the raw amino-acid sequence, 158 residues long: Urease accessory protein UreE (158 aa).

Belongs to the UreE family.

It is found in the cytoplasm. Involved in urease metallocenter assembly. Binds nickel. Probably functions as a nickel donor during metallocenter assembly. The sequence is that of Urease accessory protein UreE from Klebsiella pneumoniae (strain 342).